We begin with the raw amino-acid sequence, 491 residues long: Ketol-acid reductoisomerase (NADP(+)) (491 aa).

In terms of domain architecture, KARI N-terminal Rossmann spans 15-208 (AQLGKCRFMG…GGHRAGVLES (194 aa)). NADP(+)-binding positions include 45 to 48 (CGAQ), R68, R76, S78, and 108 to 110 (DKQ). The active site involves H132. G158 contacts NADP(+). KARI C-terminal knotted domains are found at residues 209-344 (SFVA…TAPQ) and 345-484 (YEGK…MTDM). 4 residues coordinate Mg(2+): D217, E221, E389, and E393. S414 lines the substrate pocket.

It belongs to the ketol-acid reductoisomerase family. The cofactor is Mg(2+).

It carries out the reaction (2R)-2,3-dihydroxy-3-methylbutanoate + NADP(+) = (2S)-2-acetolactate + NADPH + H(+). The catalysed reaction is (2R,3R)-2,3-dihydroxy-3-methylpentanoate + NADP(+) = (S)-2-ethyl-2-hydroxy-3-oxobutanoate + NADPH + H(+). Its pathway is amino-acid biosynthesis; L-isoleucine biosynthesis; L-isoleucine from 2-oxobutanoate: step 2/4. The protein operates within amino-acid biosynthesis; L-valine biosynthesis; L-valine from pyruvate: step 2/4. Involved in the biosynthesis of branched-chain amino acids (BCAA). Catalyzes an alkyl-migration followed by a ketol-acid reduction of (S)-2-acetolactate (S2AL) to yield (R)-2,3-dihydroxy-isovalerate. In the isomerase reaction, S2AL is rearranged via a Mg-dependent methyl migration to produce 3-hydroxy-3-methyl-2-ketobutyrate (HMKB). In the reductase reaction, this 2-ketoacid undergoes a metal-dependent reduction by NADPH to yield (R)-2,3-dihydroxy-isovalerate. The protein is Ketol-acid reductoisomerase (NADP(+)) of Escherichia coli O157:H7.